A 241-amino-acid chain; its full sequence is Geranylgeranylglyceryl phosphate synthase (241 aa).

The Mg(2+) site is built by aspartate 19 and serine 46. Residues 167–173 (YLEAGSG), 198–199 (GG), and 220–221 (GT) contribute to the sn-glycerol 1-phosphate site.

It belongs to the GGGP/HepGP synthase family. Group II subfamily. It depends on Mg(2+) as a cofactor.

It localises to the cytoplasm. It carries out the reaction sn-glycerol 1-phosphate + (2E,6E,10E)-geranylgeranyl diphosphate = sn-3-O-(geranylgeranyl)glycerol 1-phosphate + diphosphate. It functions in the pathway membrane lipid metabolism; glycerophospholipid metabolism. Its function is as follows. Prenyltransferase that catalyzes the transfer of the geranylgeranyl moiety of geranylgeranyl diphosphate (GGPP) to the C3 hydroxyl of sn-glycerol-1-phosphate (G1P). This reaction is the first ether-bond-formation step in the biosynthesis of archaeal membrane lipids. The sequence is that of Geranylgeranylglyceryl phosphate synthase from Pyrobaculum calidifontis (strain DSM 21063 / JCM 11548 / VA1).